A 63-amino-acid chain; its full sequence is ATP synthase F(0) complex subunit 8 (63 aa).

The chain crosses the membrane as a helical span at residues 8-24; the sequence is TWLLTILSMLLTLFVLF. Position 57 is an N6-acetyllysine (K57).

This sequence belongs to the ATPase protein 8 family. In terms of assembly, component of the ATP synthase complex composed at least of ATP5F1A/subunit alpha, ATP5F1B/subunit beta, ATP5MC1/subunit c (homooctomer), MT-ATP6/subunit a, MT-ATP8/subunit 8, ATP5ME/subunit e, ATP5MF/subunit f, ATP5MG/subunit g, ATP5MK/subunit k, ATP5MJ/subunit j, ATP5F1C/subunit gamma, ATP5F1D/subunit delta, ATP5F1E/subunit epsilon, ATP5PF/subunit F6, ATP5PB/subunit b, ATP5PD/subunit d, ATP5PO/subunit OSCP. ATP synthase complex consists of a soluble F(1) head domain (subunits alpha(3) and beta(3)) - the catalytic core - and a membrane F(0) domain - the membrane proton channel (subunits c, a, 8, e, f, g, k and j). These two domains are linked by a central stalk (subunits gamma, delta, and epsilon) rotating inside the F1 region and a stationary peripheral stalk (subunits F6, b, d, and OSCP). Interacts with PRICKLE3.

It localises to the mitochondrion membrane. In terms of biological role, subunit 8, of the mitochondrial membrane ATP synthase complex (F(1)F(0) ATP synthase or Complex V) that produces ATP from ADP in the presence of a proton gradient across the membrane which is generated by electron transport complexes of the respiratory chain. ATP synthase complex consist of a soluble F(1) head domain - the catalytic core - and a membrane F(1) domain - the membrane proton channel. These two domains are linked by a central stalk rotating inside the F(1) region and a stationary peripheral stalk. During catalysis, ATP synthesis in the catalytic domain of F(1) is coupled via a rotary mechanism of the central stalk subunits to proton translocation. In vivo, can only synthesize ATP although its ATP hydrolase activity can be activated artificially in vitro. Part of the complex F(0) domain. The sequence is that of ATP synthase F(0) complex subunit 8 from Balaenoptera musculus (Blue whale).